We begin with the raw amino-acid sequence, 428 residues long: D-alanine--D-alanine ligase (428 aa).

An ATP-grasp domain is found at 205 to 424 (KVVLDAAGIP…YTELITRLIE (220 aa)). Residue 237–299 (DAGLTYPLFV…EQGIDGREIE (63 aa)) coordinates ATP. Residues aspartate 378, glutamate 391, and asparagine 393 each contribute to the Mg(2+) site.

The protein belongs to the D-alanine--D-alanine ligase family. The cofactor is Mg(2+). Requires Mn(2+) as cofactor.

Its subcellular location is the cytoplasm. The catalysed reaction is 2 D-alanine + ATP = D-alanyl-D-alanine + ADP + phosphate + H(+). The protein operates within cell wall biogenesis; peptidoglycan biosynthesis. In terms of biological role, cell wall formation. The chain is D-alanine--D-alanine ligase from Bifidobacterium longum (strain NCC 2705).